Here is a 95-residue protein sequence, read N- to C-terminus: Small ribosomal subunit protein bS6 (95 aa).

It belongs to the bacterial ribosomal protein bS6 family.

Functionally, binds together with bS18 to 16S ribosomal RNA. This Clostridium perfringens (strain ATCC 13124 / DSM 756 / JCM 1290 / NCIMB 6125 / NCTC 8237 / Type A) protein is Small ribosomal subunit protein bS6.